A 452-amino-acid polypeptide reads, in one-letter code: Pup--protein ligase (452 aa).

E9 is a Mg(2+) binding site. An ATP-binding site is contributed by R53. Y55 provides a ligand contact to Mg(2+). Catalysis depends on D57, which acts as the Proton acceptor. Residue E63 coordinates Mg(2+). ATP contacts are provided by T66 and W419.

It belongs to the Pup ligase/Pup deamidase family. Pup-conjugating enzyme subfamily.

It carries out the reaction ATP + [prokaryotic ubiquitin-like protein]-L-glutamate + [protein]-L-lysine = ADP + phosphate + N(6)-([prokaryotic ubiquitin-like protein]-gamma-L-glutamyl)-[protein]-L-lysine.. It functions in the pathway protein degradation; proteasomal Pup-dependent pathway. Its pathway is protein modification; protein pupylation. Its function is as follows. Catalyzes the covalent attachment of the prokaryotic ubiquitin-like protein modifier Pup to the proteasomal substrate proteins, thereby targeting them for proteasomal degradation. This tagging system is termed pupylation. The ligation reaction involves the side-chain carboxylate of the C-terminal glutamate of Pup and the side-chain amino group of a substrate lysine. This is Pup--protein ligase from Frankia alni (strain DSM 45986 / CECT 9034 / ACN14a).